The sequence spans 461 residues: Fumarate hydratase class II (461 aa).

Substrate is bound by residues Ser97–Thr99, His127–Asp130, Ser137–Asn139, and Thr185. His186 serves as the catalytic Proton donor/acceptor. The active site involves Ser316. Substrate-binding positions include Ser317 and Lys322 to Asn324.

Belongs to the class-II fumarase/aspartase family. Fumarase subfamily. As to quaternary structure, homotetramer.

Its subcellular location is the cytoplasm. It carries out the reaction (S)-malate = fumarate + H2O. It participates in carbohydrate metabolism; tricarboxylic acid cycle; (S)-malate from fumarate: step 1/1. Its function is as follows. Involved in the TCA cycle. Catalyzes the stereospecific interconversion of fumarate to L-malate. In Staphylococcus saprophyticus subsp. saprophyticus (strain ATCC 15305 / DSM 20229 / NCIMB 8711 / NCTC 7292 / S-41), this protein is Fumarate hydratase class II.